Consider the following 370-residue polypeptide: 3-dehydroquinate synthase (370 aa).

NAD(+) contacts are provided by residues 108–112, 132–133, Lys145, and Lys154; these read GVIGD and TT. Positions 187, 249, and 267 each coordinate Zn(2+).

It belongs to the sugar phosphate cyclases superfamily. Dehydroquinate synthase family. Co(2+) serves as cofactor. Zn(2+) is required as a cofactor. It depends on NAD(+) as a cofactor.

It is found in the cytoplasm. It carries out the reaction 7-phospho-2-dehydro-3-deoxy-D-arabino-heptonate = 3-dehydroquinate + phosphate. It participates in metabolic intermediate biosynthesis; chorismate biosynthesis; chorismate from D-erythrose 4-phosphate and phosphoenolpyruvate: step 2/7. Its function is as follows. Catalyzes the conversion of 3-deoxy-D-arabino-heptulosonate 7-phosphate (DAHP) to dehydroquinate (DHQ). This is 3-dehydroquinate synthase from Cereibacter sphaeroides (strain ATCC 17029 / ATH 2.4.9) (Rhodobacter sphaeroides).